Consider the following 195-residue polypeptide: Imidazoleglycerol-phosphate dehydratase (195 aa).

This sequence belongs to the imidazoleglycerol-phosphate dehydratase family.

It localises to the cytoplasm. The enzyme catalyses D-erythro-1-(imidazol-4-yl)glycerol 3-phosphate = 3-(imidazol-4-yl)-2-oxopropyl phosphate + H2O. It participates in amino-acid biosynthesis; L-histidine biosynthesis; L-histidine from 5-phospho-alpha-D-ribose 1-diphosphate: step 6/9. In Heliobacterium modesticaldum (strain ATCC 51547 / Ice1), this protein is Imidazoleglycerol-phosphate dehydratase.